The following is a 511-amino-acid chain: Bifunctional purine biosynthesis protein PurH (511 aa).

The 145-residue stretch at 1-145 (MKKRALVSVS…KNHKFVSVIV (145 aa)) folds into the MGS-like domain.

The protein belongs to the PurH family.

It catalyses the reaction (6R)-10-formyltetrahydrofolate + 5-amino-1-(5-phospho-beta-D-ribosyl)imidazole-4-carboxamide = 5-formamido-1-(5-phospho-D-ribosyl)imidazole-4-carboxamide + (6S)-5,6,7,8-tetrahydrofolate. It carries out the reaction IMP + H2O = 5-formamido-1-(5-phospho-D-ribosyl)imidazole-4-carboxamide. It functions in the pathway purine metabolism; IMP biosynthesis via de novo pathway; 5-formamido-1-(5-phospho-D-ribosyl)imidazole-4-carboxamide from 5-amino-1-(5-phospho-D-ribosyl)imidazole-4-carboxamide (10-formyl THF route): step 1/1. It participates in purine metabolism; IMP biosynthesis via de novo pathway; IMP from 5-formamido-1-(5-phospho-D-ribosyl)imidazole-4-carboxamide: step 1/1. This Bacillus cereus (strain ATCC 14579 / DSM 31 / CCUG 7414 / JCM 2152 / NBRC 15305 / NCIMB 9373 / NCTC 2599 / NRRL B-3711) protein is Bifunctional purine biosynthesis protein PurH.